A 348-amino-acid chain; its full sequence is Photosystem II protein D1 (348 aa).

The next 3 membrane-spanning stretches (helical) occupy residues 33 to 50, 122 to 137, and 146 to 160; these read YIGW…LATV, HFIF…EWEF, and WIFV…ASCA. Residue histidine 122 coordinates chlorophyll a. Tryptophan 130 lines the pheophytin a pocket. Aspartate 174 and glutamate 193 together coordinate [CaMn4O5] cluster. The helical transmembrane segment at 201–222 threads the bilayer; the sequence is FHILGVAGVFGGSLFSAMHGSL. Chlorophyll a is bound at residue histidine 202. A quinone is bound by residues histidine 219 and 268-269; that span reads SF. Histidine 219 contributes to the Fe cation binding site. Histidine 276 contacts Fe cation. The helical transmembrane segment at 278 to 292 threads the bilayer; it reads FLAAWPVIGIWFTAL. [CaMn4O5] cluster-binding residues include histidine 336, glutamate 337, aspartate 346, and alanine 348.

The protein belongs to the reaction center PufL/M/PsbA/D family. In terms of assembly, PSII is composed of 1 copy each of membrane proteins PsbA, PsbB, PsbC, PsbD, PsbE, PsbF, PsbH, PsbI, PsbJ, PsbK, PsbL, PsbM, PsbT, PsbX, PsbY, PsbZ, Psb30/Ycf12, at least 3 peripheral proteins of the oxygen-evolving complex and a large number of cofactors. It forms dimeric complexes. It depends on The D1/D2 heterodimer binds P680, chlorophylls that are the primary electron donor of PSII, and subsequent electron acceptors. It shares a non-heme iron and each subunit binds pheophytin, quinone, additional chlorophylls, carotenoids and lipids. D1 provides most of the ligands for the Mn4-Ca-O5 cluster of the oxygen-evolving complex (OEC). There is also a Cl(-1) ion associated with D1 and D2, which is required for oxygen evolution. The PSII complex binds additional chlorophylls, carotenoids and specific lipids. as a cofactor. In terms of processing, tyr-165 forms a radical intermediate that is referred to as redox-active TyrZ, YZ or Y-Z.

The protein resides in the plastid. It localises to the chloroplast thylakoid membrane. It carries out the reaction 2 a plastoquinone + 4 hnu + 2 H2O = 2 a plastoquinol + O2. In terms of biological role, photosystem II (PSII) is a light-driven water:plastoquinone oxidoreductase that uses light energy to abstract electrons from H(2)O, generating O(2) and a proton gradient subsequently used for ATP formation. It consists of a core antenna complex that captures photons, and an electron transfer chain that converts photonic excitation into a charge separation. The D1/D2 (PsbA/PsbD) reaction center heterodimer binds P680, the primary electron donor of PSII as well as several subsequent electron acceptors. The chain is Photosystem II protein D1 from Heterocapsa rotundata (Dinoflagellate).